Here is a 1509-residue protein sequence, read N- to C-terminus: Putative endo-alpha-N-acetylgalactosaminidase (1509 aa).

An N-terminal signal peptide occupies residues 1–41; sequence MPFRGRRRQSALRGLSLAATFCLAAGSSGISGALFATPAQA. Ca(2+) contacts are provided by aspartate 288, asparagine 290, aspartate 292, lysine 294, and aspartate 299. The tract at residues 313-585 is catalytic; the sequence is GGDDVKNRVV…NLPVKFLQQQ (273 aa). Aspartate 369 contributes to the substrate binding site. Aspartate 472 acts as the Nucleophile in catalysis. Glutamate 498 serves as the catalytic Proton donor/acceptor. Ca(2+) is bound by residues asparagine 878, glutamate 880, aspartate 926, and tyrosine 929. 2 disordered regions span residues 1176–1197 and 1403–1439; these read NGWGPVEKDQANGEQAQGDGPP and IKAANPNPGTGSNPGTGSNPGTDPGTGSAGGNSSGGG. Positions 1407-1428 are enriched in low complexity; sequence NPNPGTGSNPGTGSNPGTDPGT. Positions 1429–1439 are enriched in gly residues; that stretch reads GSAGGNSSGGG. The LPXTG sorting signal signature appears at 1475–1479; the sequence is LAETG. Residue threonine 1478 is modified to Pentaglycyl murein peptidoglycan amidated threonine. A propeptide spans 1479 to 1509 (removed by sortase); it reads GFSGLVLPLGIGLMLLLIGAAAIIVRRHRHS.

The protein belongs to the glycosyl hydrolase 101 family. A subfamily.

It is found in the secreted. The protein localises to the cell wall. It catalyses the reaction a 3-O-[beta-D-galactosyl-(1-&gt;3)-N-acetyl-alpha-D-galactosaminyl]-L-threonyl-[protein] + H2O = beta-D-galactosyl-(1-&gt;3)-N-acetyl-D-galactosamine + L-threonyl-[protein]. It carries out the reaction a 3-O-[beta-D-galactosyl-(1-&gt;3)-N-acetyl-alpha-D-galactosaminyl]-L-seryl-[protein] + H2O = beta-D-galactosyl-(1-&gt;3)-N-acetyl-D-galactosamine + L-seryl-[protein]. Probably involved in the breakdown of mucin-type O-linked glycans. Specifically removes the T-antigen disaccharide (Gal-beta-1,3-GalNAc-alpha) from extracellular host glycoproteins. The protein is Putative endo-alpha-N-acetylgalactosaminidase of Renibacterium salmoninarum (strain ATCC 33209 / DSM 20767 / JCM 11484 / NBRC 15589 / NCIMB 2235).